We begin with the raw amino-acid sequence, 299 residues long: ATP phosphoribosyltransferase (299 aa).

This sequence belongs to the ATP phosphoribosyltransferase family. Long subfamily. In terms of assembly, equilibrium between an active dimeric form, an inactive hexameric form and higher aggregates. Interconversion between the various forms is largely reversible and is influenced by the natural substrates and inhibitors of the enzyme. Mg(2+) is required as a cofactor.

The protein resides in the cytoplasm. The catalysed reaction is 1-(5-phospho-beta-D-ribosyl)-ATP + diphosphate = 5-phospho-alpha-D-ribose 1-diphosphate + ATP. It functions in the pathway amino-acid biosynthesis; L-histidine biosynthesis; L-histidine from 5-phospho-alpha-D-ribose 1-diphosphate: step 1/9. Feedback inhibited by histidine. Functionally, catalyzes the condensation of ATP and 5-phosphoribose 1-diphosphate to form N'-(5'-phosphoribosyl)-ATP (PR-ATP). Has a crucial role in the pathway because the rate of histidine biosynthesis seems to be controlled primarily by regulation of HisG enzymatic activity. This chain is ATP phosphoribosyltransferase, found in Klebsiella pneumoniae (strain 342).